A 205-amino-acid chain; its full sequence is Large ribosomal subunit protein uL3 (205 aa).

The protein belongs to the universal ribosomal protein uL3 family. Part of the 50S ribosomal subunit. Forms a cluster with proteins L14 and L19.

One of the primary rRNA binding proteins, it binds directly near the 3'-end of the 23S rRNA, where it nucleates assembly of the 50S subunit. The sequence is that of Large ribosomal subunit protein uL3 from Porphyromonas gingivalis (strain ATCC 33277 / DSM 20709 / CIP 103683 / JCM 12257 / NCTC 11834 / 2561).